Consider the following 505-residue polypeptide: ATP synthase subunit alpha (505 aa).

Residue 170 to 177 coordinates ATP; it reads GDRQTGKT.

Belongs to the ATPase alpha/beta chains family. In terms of assembly, F-type ATPases have 2 components, CF(1) - the catalytic core - and CF(0) - the membrane proton channel. CF(1) has five subunits: alpha(3), beta(3), gamma(1), delta(1), epsilon(1). CF(0) has four main subunits: a(1), b(1), b'(1) and c(9-12).

Its subcellular location is the cellular thylakoid membrane. It carries out the reaction ATP + H2O + 4 H(+)(in) = ADP + phosphate + 5 H(+)(out). In terms of biological role, produces ATP from ADP in the presence of a proton gradient across the membrane. The alpha chain is a regulatory subunit. The polypeptide is ATP synthase subunit alpha (Synechococcus sp. (strain RCC307)).